The sequence spans 556 residues: 2-methylpropanoate--CoA ligase CCL4 (556 aa).

ATP is bound by residues 192–200, 325–330, Asp-423, 435–438, and Lys-531; these read TSGTTSSPK, HGYGLT, and IKDR. Residues 260 to 325 form an SBD1 region; sequence DSEIIYDMIK…TESLGFAVSH (66 aa). Positions 326-402 are SBD2; it reads GYGLTETAGL…LRGGSVMLGY (77 aa).

It belongs to the ATP-dependent AMP-binding enzyme family. Mostly expressed in old leaves and in cones and glandular trichomes (lupulin glands) after flowering, and, to a lower extent, in stems, young leaves and flowers.

The protein resides in the cytoplasm. It localises to the cytosol. The catalysed reaction is 2-methylpropanoate + ATP + CoA = 2-methylpropanoyl-CoA + AMP + diphosphate. The enzyme catalyses propanoate + ATP + CoA = propanoyl-CoA + AMP + diphosphate. It catalyses the reaction butanoate + ATP + CoA = butanoyl-CoA + AMP + diphosphate. It carries out the reaction 2-methylbutanoate + ATP + CoA = 2-methylbutanoyl-CoA + AMP + diphosphate. The protein operates within secondary metabolite biosynthesis. Its function is as follows. Involved in the biosynthesis of prenylated phenolics natural products which contribute to the bitter taste of beer and display broad biological activities. Catalyzes the ligation of CoA on 2-methylpropanoate (isobutyric acid) and 2-methylbutanoate to produce 2-methylpropanoyl-CoA and 2-methylbutanoyl-CoA, respectively. Can also use propanoate and butanoate as substrates with a lower efficiency. This is 2-methylpropanoate--CoA ligase CCL4 from Humulus lupulus (European hop).